A 142-amino-acid chain; its full sequence is Putative pre-16S rRNA nuclease (142 aa).

Belongs to the YqgF nuclease family.

The protein resides in the cytoplasm. Functionally, could be a nuclease involved in processing of the 5'-end of pre-16S rRNA. The protein is Putative pre-16S rRNA nuclease of Lactobacillus helveticus (strain DPC 4571).